Consider the following 1268-residue polypeptide: uncharacterized protein (1268 aa).

The segment covering 191–206 (KIVSVKPSKSSQQVDV) has biased composition (low complexity). Disordered regions lie at residues 191–235 (KIVS…SKKK) and 253–273 (NCRS…SKGC). Residues 223–235 (RKPEKSSQDSKKK) are compositionally biased toward basic and acidic residues. The segment at 239–256 (PTCFYCNKKGHYATNCRS) adopts a CCHC-type zinc-finger fold. Residues 465 to 644 (EMGVIVPITY…KQVTFLGFVD (180 aa)) enclose the Reverse transcriptase domain. The Integrase catalytic domain maps to 844–997 (VPEAPWKRIH…TPAECHFGRK (154 aa)). The disordered stretch occupies residues 1092-1268 (GDYSRSSVNP…RRERVRTTWR (177 aa)). Composition is skewed to polar residues over residues 1127 to 1143 (VTSN…SRIT) and 1160 to 1169 (GSCSPTNNDV). Positions 1208 to 1221 (PSTSTGTPRGSTST) are enriched in low complexity. Positions 1222-1249 (QLGQASTRNGSRYTASGRNPSCQGNRYS) are enriched in polar residues. The span at 1257–1268 (TARRERVRTTWR) shows a compositional bias: basic and acidic residues.

This is an uncharacterized protein from Caenorhabditis elegans.